Reading from the N-terminus, the 370-residue chain is Glutamate 5-kinase (370 aa).

Lysine 17 is an ATP binding site. Residues serine 56, aspartate 143, and asparagine 155 each coordinate substrate. Position 175-176 (175-176 (SD)) interacts with ATP. Residues 280-357 (RGTIRVDAGA…AEIVAILGYS (78 aa)) form the PUA domain.

Belongs to the glutamate 5-kinase family.

It localises to the cytoplasm. It catalyses the reaction L-glutamate + ATP = L-glutamyl 5-phosphate + ADP. It participates in amino-acid biosynthesis; L-proline biosynthesis; L-glutamate 5-semialdehyde from L-glutamate: step 1/2. Catalyzes the transfer of a phosphate group to glutamate to form L-glutamate 5-phosphate. The protein is Glutamate 5-kinase of Cereibacter sphaeroides (strain ATCC 17023 / DSM 158 / JCM 6121 / CCUG 31486 / LMG 2827 / NBRC 12203 / NCIMB 8253 / ATH 2.4.1.) (Rhodobacter sphaeroides).